An 80-amino-acid chain; its full sequence is uncharacterized protein (80 aa).

This is an uncharacterized protein from Lepidoptera (butterflies and moths).